The sequence spans 90 residues: Small ribosomal subunit protein uS15c (90 aa).

This sequence belongs to the universal ribosomal protein uS15 family. Part of the 30S ribosomal subunit.

The protein resides in the plastid. It localises to the chloroplast. This chain is Small ribosomal subunit protein uS15c (rps15-A), found in Oryza nivara (Indian wild rice).